Consider the following 319-residue polypeptide: Adenosine receptor A3 (319 aa).

At 1-15 (MEADNTTETDWLNIT) the chain is on the extracellular side. Asn-5 and Asn-13 each carry an N-linked (GlcNAc...) asparagine glycan. Residues 16–38 (YITMEAAIGLCAVVGNMLVIWVV) form a helical membrane-spanning segment. The Cytoplasmic portion of the chain corresponds to 39-49 (KLNPTLRTTTV). The chain crosses the membrane as a helical span at residues 50–73 (YFIVSLALADIAVGVLVIPLAIAV). Residues 74-85 (SLQVKMHFYACL) lie on the Extracellular side of the membrane. A disulfide bridge connects residues Cys-84 and Cys-167. The helical transmembrane segment at 86–107 (FMSCVLLIFTHASIMSLLAIAV) threads the bilayer. The Cytoplasmic portion of the chain corresponds to 108–127 (HRYLRVKLTVRYRTVTTQRR). Residues 128-149 (IWLFLGLCWLVSFLVGLTPMFG) form a helical membrane-spanning segment. At 150-178 (WNRKATLASSQNSSTLLCHFRSVVSLDYM) the chain is on the extracellular side. Asn-161 is a glycosylation site (N-linked (GlcNAc...) asparagine). Residues 179-199 (VFFSFITWILVPLVVMCIIYL) form a helical membrane-spanning segment. At 200-232 (DIFYIIRNKLSQNLTGFRETRAFYGREFKTAKS) the chain is on the cytoplasmic side. A helical transmembrane segment spans residues 233–256 (LFLVLFLFALCWLPLSIINFVSYF). The Extracellular segment spans residues 257–262 (DVKIPD). Residues 263–285 (VAMCLGILLSHANSMMNPIVYAC) form a helical membrane-spanning segment. Residues 286-319 (KIKKFKETYFLILRAVRLCQTSDSLDSNMEQTTE) lie on the Cytoplasmic side of the membrane. A lipid anchor (S-palmitoyl cysteine) is attached at Cys-304.

It belongs to the G-protein coupled receptor 1 family. Phosphorylation on Thr-317 and Thr-318 may be crucial for rapid desensitization. Phosphorylation on Thr-317 may be necessary for phosphorylation on Thr-318 to occur.

It is found in the cell membrane. In terms of biological role, receptor for adenosine. The activity of this receptor is mediated by G proteins which inhibits adenylyl cyclase. This chain is Adenosine receptor A3 (Adora3), found in Mus musculus (Mouse).